We begin with the raw amino-acid sequence, 69 residues long: Putative F-box protein At2g33705 (69 aa).

Residues 14 to 59 (GVNLEQIPYDLVLEILLKLSAKSIARFRCVSKLWDSTFRSRYFTEL) form the F-box domain.

This is Putative F-box protein At2g33705 from Arabidopsis thaliana (Mouse-ear cress).